The chain runs to 82 residues: Putative defensin-like protein 48 (82 aa).

The first 28 residues, 1–28, serve as a signal peptide directing secretion; sequence MGIKTLIIFFHIFILAVLSSNNIILTSG. 4 cysteine pairs are disulfide-bonded: C39/C80, C43/C67, C53/C78, and C57/C79.

The protein belongs to the DEFL family.

The protein localises to the secreted. The chain is Putative defensin-like protein 48 from Arabidopsis thaliana (Mouse-ear cress).